The sequence spans 317 residues: Type II methyltransferase M.MgeORF184P (317 aa).

It belongs to the N(4)/N(6)-methyltransferase family.

The catalysed reaction is a 2'-deoxyadenosine in DNA + S-adenosyl-L-methionine = an N(6)-methyl-2'-deoxyadenosine in DNA + S-adenosyl-L-homocysteine + H(+). Functionally, probably recognizes the double-stranded sequence 5'-CTAT-3' and methylates A-3 on only one strand; as the bacterial DNA is methylated on this sequence and this is the only type II methylase in the genome, it is probably responsible for all of the methylation on this site in the genome. This chain is Type II methyltransferase M.MgeORF184P, found in Mycoplasma genitalium (strain ATCC 33530 / DSM 19775 / NCTC 10195 / G37) (Mycoplasmoides genitalium).